A 218-amino-acid chain; its full sequence is Protein-lysine N-methyltransferase M142.8 (218 aa).

The protein belongs to the class I-like SAM-binding methyltransferase superfamily. EFM5 family.

Its subcellular location is the cytoplasm. S-adenosyl-L-methionine-dependent protein-lysine N-methyltransferase that methylates elongation factor 1-alpha. The protein is Protein-lysine N-methyltransferase M142.8 of Caenorhabditis elegans.